The following is a 536-amino-acid chain: ATP synthase subunit alpha, mitochondrial (536 aa).

Residues 1–24 (MFKNALRRAGVAAPRISRVAQRGY) constitute a mitochondrion transit peptide. 195 to 202 (GDRQTGKT) is a binding site for ATP.

F-type ATP synthases have 2 components, the catalytic core F(1) and the membrane-embedded component F(0), linked together by a central stalk and a peripheral stalk. The central stalk, also called rotor shaft, is often seen as part of F(1). The peripheral stalk is seen as part of F(0). F(0) contains the membrane channel next to the rotor. F-type ATP synthases form dimers but each monomer functions independently in ATP generation. The dimer consists of 17 different polypeptides: ATP1 (subunit alpha, 3 molecules per monomer, part of F(1)), ATP2 (subunit beta, 3 copies per monomer, part of F(1)), ATP3 (subunit gamma, part of the central stalk), ATP4 (subunit b, part of the peripheral stalk), ATP5/OSCP (subunit 5/OSCP, part of the peripheral stalk), ATP6 (subunit a, part of the peripheral stalk), ATP7 (subunit d, part of the peripheral stalk), ATP8 (subunit 8, part of the peripheral stalk), OLI1 (subunit c, part of the rotor, 10 molecules per monomer), ATP14 (subunit h, part of the peripheral stalk), ATP15 (subunit epsilon, part of the central stalk), ATP16 (subunit delta, part of the central stalk), ATP17 (subunit f, part of the peripheral stalk), ATP18 (subunit i/j, part of the peripheral stalk), ATP19 (subunit k, dimer-specific, at interface between monomers), ATP20 (subunit g, at interface between monomers), TIM11 (subunit e, at interface between monomers).

Its subcellular location is the mitochondrion inner membrane. Functionally, mitochondrial membrane ATP synthase (F(1)F(0) ATP synthase or Complex V) produces ATP from ADP in the presence of a proton gradient across the membrane which is generated by electron transport complexes of the respiratory chain. F-type ATP synthases consist of two structural domains, F(1) - containing the extramembraneous catalytic core, and F(0) - containing the membrane proton channel, linked together by a central stalk and a peripheral stalk. During catalysis, ATP synthesis in the catalytic domain of F(1) is coupled via a rotary mechanism of the central stalk subunits to proton translocation. Subunits alpha/ATP1 and beta/ATP2 form the catalytic core in F(1). Rotation of the central stalk against the surrounding alpha/ATP1(3)beta/ATP2(3) subunits leads to hydrolysis of ATP in three separate catalytic sites on the beta/ATP2 subunits. Subunit alpha/ATP1 does not bear the catalytic high-affinity ATP-binding sites. In Yarrowia lipolytica (strain CLIB 122 / E 150) (Yeast), this protein is ATP synthase subunit alpha, mitochondrial.